The following is a 281-amino-acid chain: Protein ZAR1-like 1.S (281 aa).

The segment at 183–267 (QKYGFFQCKD…QDLCGRCKGQ (85 aa)) adopts a 3CxxC-type zinc-finger fold.

The protein belongs to the ZAR1 family. As to quaternary structure, component of a cytoplasmic ribonucleoprotein complex together with eif4enif1/4E-T and cpeb1. Expressed in oocytes.

It is found in the cytoplasm. It localises to the cytoplasmic ribonucleoprotein granule. MRNA-binding protein required for maternal mRNA storage, translation and degradation during oocyte maturation. Controls timing of meiosis during oogenesis. Probably promotes formation of some phase-separated membraneless compartment that stores maternal mRNAs in oocytes: acts by undergoing liquid-liquid phase separation upon binding to maternal mRNAs. Binds to the 3'-UTR of maternal mRNAs, inhibiting their translation. This is Protein ZAR1-like 1.S from Xenopus laevis (African clawed frog).